The chain runs to 159 residues: ATP synthase subunit b 1 (159 aa).

Residues 5 to 25 (FWAFIGLILFLALLFYFKVPA) form a helical membrane-spanning segment.

Belongs to the ATPase B chain family. As to quaternary structure, F-type ATPases have 2 components, F(1) - the catalytic core - and F(0) - the membrane proton channel. F(1) has five subunits: alpha(3), beta(3), gamma(1), delta(1), epsilon(1). F(0) has three main subunits: a(1), b(2) and c(10-14). The alpha and beta chains form an alternating ring which encloses part of the gamma chain. F(1) is attached to F(0) by a central stalk formed by the gamma and epsilon chains, while a peripheral stalk is formed by the delta and b chains.

Its subcellular location is the cell inner membrane. In terms of biological role, f(1)F(0) ATP synthase produces ATP from ADP in the presence of a proton or sodium gradient. F-type ATPases consist of two structural domains, F(1) containing the extramembraneous catalytic core and F(0) containing the membrane proton channel, linked together by a central stalk and a peripheral stalk. During catalysis, ATP synthesis in the catalytic domain of F(1) is coupled via a rotary mechanism of the central stalk subunits to proton translocation. Component of the F(0) channel, it forms part of the peripheral stalk, linking F(1) to F(0). This is ATP synthase subunit b 1 from Bartonella bacilliformis (strain ATCC 35685 / KC583 / Herrer 020/F12,63).